Reading from the N-terminus, the 345-residue chain is Nuclear distribution protein nudE-like 1 (345 aa).

The stretch at 27–190 (KQTFQEARDE…LAVRERQQEV (164 aa)) forms a coiled coil. A self-association region spans residues 56 to 166 (VQAEQRNRDL…LDEKESLLVS (111 aa)). An interaction with KATNB1 region spans residues 64-189 (DLQADNQRLK…ELAVRERQQE (126 aa)). Residues 114–133 (YVRELEQANDDLERAKRATI) form a required for interaction with PAFAH1B1 region. The segment at 175 to 345 (RDLRQELAVR…SAPGMLPLSV (171 aa)) is interaction with CENPF. The interaction with YWHAE stretch occupies residues 189–256 (EVTRKSAPSS…SARISALNIV (68 aa)). An interaction with NEFL region spans residues 191–345 (TRKSAPSSPT…SAPGMLPLSV (155 aa)). An interaction with KATNA1 region spans residues 195-256 (APSSPTLDCE…SARISALNIV (62 aa)). Serine 215 carries the post-translational modification Phosphoserine. Positions 217–240 (PATPVGKGTENSFPSPKAIPNGFG) are disordered. Threonine 219 is subject to Phosphothreonine; by CDK1 and MAPK1. An interaction with DISC1 region spans residues 227–278 (NSFPSPKAIPNGFGTSPLTPSARISALNIVGDLLRKVGALESKLAACRNFAK). Serine 231 carries the phosphoserine modification. A Phosphoserine; by CDK1 modification is found at serine 242. Threonine 245 is modified (phosphothreonine; by CDK1 and MAPK1). The segment at 256–291 (VGDLLRKVGALESKLAACRNFAKDQASRKSYISGNV) is required for localization to the centrosome and interaction with dynein, dynactin, tubulin gamma, PCM1 and PCNT. Cysteine 273 is lipidated: S-palmitoyl cysteine; by ZDHHC2, ZDHHC3 and ZDHHC7. The segment at 316–345 (AVNGFDPAPPPPGLGSSRPLSAPGMLPLSV) is disordered. Residues 329 to 339 (LGSSRPLSAPG) show a composition bias toward low complexity. A Phosphoserine modification is found at serine 344.

The protein belongs to the nudE family. Self-associates. Interacts with DISC1, dynein, dynactin, tubulin gamma, KATNA1, KATNB1, microtubules, PAFAH1B1, PCM1, PCNT, and YWHAE. Interacts directly with NEFL and indirectly with NEFH. Interacts (via C-terminus) with CENPF. Interacts with ZNF365. Interacts with PLEKHM1 (via N- and C-terminus). Interacts with GTP-bound RAB9A; the interaction may lead to RAB9A-dynein motor tethering. Post-translationally, phosphorylated in mitosis. Can be phosphorylated by CDK1, CDK5 and MAPK1. Phosphorylation by CDK5 promotes interaction with KATNA1 and YWHAE. Palmitoylation at Cys-273 reduces affinity for dynein. In terms of tissue distribution, expressed at low levels in heart, hypothalamus, liver, lung, spleen and stomach. Expressed at higher levels in testis and brain. Within the brain, expressed in cerebellum, cerebral stem, cortex and striatum.

The protein resides in the cytoplasm. Its subcellular location is the cytoskeleton. It localises to the microtubule organizing center. It is found in the centrosome. The protein localises to the chromosome. The protein resides in the centromere. Its subcellular location is the kinetochore. It localises to the spindle. Its function is as follows. Required for organization of the cellular microtubule array and microtubule anchoring at the centrosome. May regulate microtubule organization at least in part by targeting the microtubule severing protein KATNA1 to the centrosome. Also positively regulates the activity of the minus-end directed microtubule motor protein dynein. May enhance dynein-mediated microtubule sliding by targeting dynein to the microtubule plus ends. Required for several dynein- and microtubule-dependent processes such as the maintenance of Golgi integrity, the centripetal motion of secretory vesicles and the coupling of the nucleus and centrosome. Also required during brain development for the migration of newly formed neurons from the ventricular/subventricular zone toward the cortical plate. Plays a role, together with DISC1, in the regulation of neurite outgrowth. Required for mitosis in some cell types but appears to be dispensible for mitosis in cortical neuronal progenitors, which instead requires NDE1. Facilitates the polymerization of neurofilaments from the individual subunits NEFH and NEFL. Positively regulates lysosome peripheral distribution and ruffled border formation in osteoclasts. Plays a role, together with DISC1, in the regulation of neurite outgrowth. May act as a RAB9A/B effector that tethers RAB9-associated late endosomes to the dynein motor for their retrograde transport to the trans-Golgi network. The polypeptide is Nuclear distribution protein nudE-like 1 (NDEL1) (Oryctolagus cuniculus (Rabbit)).